The chain runs to 218 residues: MATLGTGMRCLKSCVFVLNIICLLCSLVLIGAGAYVEVKFSQYGDNLHKVWQAAPIAIIVVGVIILIVSFLGCCGAIKENVCMLYMYAFFLVVLLIAELAAAIVAVVYKDRIDSEIDALMTGALDKPTKEITEFMNLIQSSFHCCGAKGPDDYRGNVPASCKEENLTYTEGCVSVFGAFLKRNLVIVACVAFGVCFFQLLSIVIACCLGRQIKEYENV.

The Cytoplasmic portion of the chain corresponds to 1-12; it reads MATLGTGMRCLK. The helical transmembrane segment at 13 to 36 threads the bilayer; sequence SCVFVLNIICLLCSLVLIGAGAYV. The Extracellular segment spans residues 37-55; sequence EVKFSQYGDNLHKVWQAAP. A helical membrane pass occupies residues 56 to 71; that stretch reads IAIIVVGVIILIVSFL. The Cytoplasmic segment spans residues 72–82; that stretch reads GCCGAIKENVC. A helical membrane pass occupies residues 83–108; sequence MLYMYAFFLVVLLIAELAAAIVAVVY. At 109-183 the chain is on the extracellular side; that stretch reads KDRIDSEIDA…SVFGAFLKRN (75 aa). Residue asparagine 165 is glycosylated (N-linked (GlcNAc...) asparagine). A helical transmembrane segment spans residues 184 to 205; that stretch reads LVIVACVAFGVCFFQLLSIVIA. Topologically, residues 206 to 218 are cytoplasmic; sequence CCLGRQIKEYENV.

It belongs to the tetraspanin (TM4SF) family.

Its subcellular location is the membrane. This chain is 23 kDa integral membrane protein, found in Schistosoma mansoni (Blood fluke).